The sequence spans 305 residues: UDP-3-O-acyl-N-acetylglucosamine deacetylase (305 aa).

Positions 79, 238, and 242 each coordinate Zn(2+). Residue H265 is the Proton donor of the active site.

This sequence belongs to the LpxC family. The cofactor is Zn(2+).

It catalyses the reaction a UDP-3-O-[(3R)-3-hydroxyacyl]-N-acetyl-alpha-D-glucosamine + H2O = a UDP-3-O-[(3R)-3-hydroxyacyl]-alpha-D-glucosamine + acetate. It participates in glycolipid biosynthesis; lipid IV(A) biosynthesis; lipid IV(A) from (3R)-3-hydroxytetradecanoyl-[acyl-carrier-protein] and UDP-N-acetyl-alpha-D-glucosamine: step 2/6. Catalyzes the hydrolysis of UDP-3-O-myristoyl-N-acetylglucosamine to form UDP-3-O-myristoylglucosamine and acetate, the committed step in lipid A biosynthesis. The polypeptide is UDP-3-O-acyl-N-acetylglucosamine deacetylase (Edwardsiella ictaluri (strain 93-146)).